The following is a 96-amino-acid chain: Small ribosomal subunit protein bS20 (96 aa).

This sequence belongs to the bacterial ribosomal protein bS20 family.

Its function is as follows. Binds directly to 16S ribosomal RNA. The protein is Small ribosomal subunit protein bS20 of Thermotoga petrophila (strain ATCC BAA-488 / DSM 13995 / JCM 10881 / RKU-1).